A 270-amino-acid chain; its full sequence is Imidazoleglycerol-phosphate dehydratase 1, chloroplastic (270 aa).

Residues 1-62 (MELSSASAIL…QSQLRQSISC (62 aa)) constitute a chloroplast transit peptide. Ser63 carries the N-acetylserine modification. Residues Glu84, 110–118 (HMLDQLASH), 136–140 (HHTNE), Arg162, and Arg184 each bind substrate. Residues His110, His136, His137, and Glu140 each coordinate Mn(2+). Mn(2+) contacts are provided by His208, His232, His233, and Glu236. Substrate contacts are provided by residues 232–240 (HHIIEATFK) and 262–264 (SSK). Positions 250 to 270 (TETDPRRGGTIPSSKGVLSRS) are disordered.

This sequence belongs to the imidazoleglycerol-phosphate dehydratase family. It depends on Mn(2+) as a cofactor.

Its subcellular location is the plastid. It localises to the chloroplast. It carries out the reaction D-erythro-1-(imidazol-4-yl)glycerol 3-phosphate = 3-(imidazol-4-yl)-2-oxopropyl phosphate + H2O. Its pathway is amino-acid biosynthesis; L-histidine biosynthesis; L-histidine from 5-phospho-alpha-D-ribose 1-diphosphate: step 6/9. The sequence is that of Imidazoleglycerol-phosphate dehydratase 1, chloroplastic from Arabidopsis thaliana (Mouse-ear cress).